The following is an 830-amino-acid chain: Penicillin-binding protein 1A (830 aa).

Residues 1-18 (MGKKKKKRKSSAFKIILN) are Cytoplasmic-facing. Residues 19 to 39 (VFLSIFLVAGVAFGGIVFAMI) traverse the membrane as a helical; Signal-anchor for type II membrane protein segment. Over 40–830 (KTAPPLNVQQ…QNHEDNKNKQ (791 aa)) the chain is Extracellular. The interval 57–229 (SILYDDKGQY…PSVYYPYSSA (173 aa)) is transglycosylase. E96 serves as the catalytic Proton donor; for transglycosylase activity. Residues 357–641 (ASAVIMDYHN…AARLWGDIMK (285 aa)) form a transpeptidase region. Residue S398 is the Acyl-ester intermediate; for transpeptidase activity of the active site. Residues 754–830 (GGSLPPTEEK…QNHEDNKNKQ (77 aa)) form a disordered region. Over residues 760–786 (TEEKNNSNTRDKNKDKNKNKNKDKNPS) the composition is skewed to basic and acidic residues. Low complexity predominate over residues 787 to 820 (QDKPNNNNNDNNSNNNNNNNDNNNNTKPPENDSN). Residues 821-830 (QNHEDNKNKQ) show a composition bias toward basic and acidic residues.

This sequence in the N-terminal section; belongs to the glycosyltransferase 51 family. In the C-terminal section; belongs to the transpeptidase family.

It localises to the cell membrane. The enzyme catalyses [GlcNAc-(1-&gt;4)-Mur2Ac(oyl-L-Ala-gamma-D-Glu-L-Lys-D-Ala-D-Ala)](n)-di-trans,octa-cis-undecaprenyl diphosphate + beta-D-GlcNAc-(1-&gt;4)-Mur2Ac(oyl-L-Ala-gamma-D-Glu-L-Lys-D-Ala-D-Ala)-di-trans,octa-cis-undecaprenyl diphosphate = [GlcNAc-(1-&gt;4)-Mur2Ac(oyl-L-Ala-gamma-D-Glu-L-Lys-D-Ala-D-Ala)](n+1)-di-trans,octa-cis-undecaprenyl diphosphate + di-trans,octa-cis-undecaprenyl diphosphate + H(+). It carries out the reaction Preferential cleavage: (Ac)2-L-Lys-D-Ala-|-D-Ala. Also transpeptidation of peptidyl-alanyl moieties that are N-acyl substituents of D-alanine.. The protein operates within cell wall biogenesis; peptidoglycan biosynthesis. Cell wall formation. Synthesis of cross-linked peptidoglycan from the lipid intermediates. The enzyme has a penicillin-insensitive transglycosylase N-terminal domain (formation of linear glycan strands) and a penicillin-sensitive transpeptidase C-terminal domain (cross-linking of the peptide subunits). The chain is Penicillin-binding protein 1A (pbpA) from Clostridium botulinum (strain Hall / ATCC 3502 / NCTC 13319 / Type A).